A 420-amino-acid chain; its full sequence is 5'-deoxyadenosine deaminase (420 aa).

Zn(2+)-binding residues include His-55 and His-57. The substrate site is built by Glu-84 and His-176. His-203 contacts Zn(2+). Substrate-binding residues include Glu-206 and Asp-292. Asp-292 contacts Zn(2+).

It belongs to the metallo-dependent hydrolases superfamily. MTA/SAH deaminase family. In terms of assembly, homotetramer. The cofactor is Zn(2+).

The catalysed reaction is 5'-deoxyadenosine + H2O + H(+) = 5'-deoxyinosine + NH4(+). It catalyses the reaction S-adenosyl-L-homocysteine + H2O + H(+) = S-inosyl-L-homocysteine + NH4(+). It carries out the reaction S-methyl-5'-thioadenosine + H2O + H(+) = S-methyl-5'-thioinosine + NH4(+). The enzyme catalyses adenosine + H2O + H(+) = inosine + NH4(+). The protein operates within amino-acid biosynthesis; S-adenosyl-L-methionine biosynthesis. In terms of biological role, catalyzes the deamination of three SAM-derived enzymatic products, namely 5'-deoxyadenosine, S-adenosyl-L-homocysteine, and 5'-methylthioadenosine, to produce the inosine analogs. Can also deaminate adenosine. The preferred substrate for this enzyme is 5'-deoxyadenosine, but all these substrates are efficiently deaminated. Likely functions in a S-adenosyl-L-methionine (SAM) recycling pathway from S-adenosyl-L-homocysteine (SAH) produced from SAM-dependent methylation reactions. May also be involved in the recycling of 5'-deoxyadenosine, whereupon the 5'-deoxyribose moiety of 5'-deoxyinosine is further metabolized to deoxyhexoses used for the biosynthesis of aromatic amino acids in methanogens. The sequence is that of 5'-deoxyadenosine deaminase from Methanocaldococcus jannaschii (strain ATCC 43067 / DSM 2661 / JAL-1 / JCM 10045 / NBRC 100440) (Methanococcus jannaschii).